A 545-amino-acid chain; its full sequence is Protein BTN1 (545 aa).

Positions 23–49 (AHSSASDPRRTMVTNTSESPLASRQAT) are disordered. Over residues 34–49 (MVTNTSESPLASRQAT) the composition is skewed to polar residues. Helical transmembrane passes span 66-86 (AFFL…TAAL), 97-117 (LVSF…PYFL), 127-147 (VWSC…FPAL), 205-225 (VGWF…AWWV), and 234-254 (GMAI…IILP). The segment at 276 to 304 (TEDDAVERSSSDDQPTTANDDRQDSTIHI) is disordered. The next 3 helical transmembrane spans lie at 322-342 (MALL…VYAM), 408-428 (LLWL…TESL), and 440-460 (LVIV…VSVF).

This sequence belongs to the battenin family.

It localises to the vacuole membrane. Involved in vacuolar transport and vacuole pH homeostasis. Also required for cytokinesis. This is Protein BTN1 (BTN1) from Mycosarcoma maydis (Corn smut fungus).